Consider the following 168-residue polypeptide: ATP synthase subunit b, sodium ion specific (168 aa).

Residues 9-29 traverse the membrane as a helical segment; that stretch reads VSIDINMFWQIINFLILMFFF.

This sequence belongs to the ATPase B chain family. As to quaternary structure, F-type ATPases have 2 components, F(1) - the catalytic core - and F(0) - the membrane proton channel. F(1) has five subunits: alpha(3), beta(3), gamma(1), delta(1), epsilon(1). F(0) has three main subunits: a(1), b(2) and c(10-14). The alpha and beta chains form an alternating ring which encloses part of the gamma chain. F(1) is attached to F(0) by a central stalk formed by the gamma and epsilon chains, while a peripheral stalk is formed by the delta and b chains.

It is found in the cell inner membrane. Its function is as follows. F(1)F(0) ATP synthase produces ATP from ADP in the presence of a proton or sodium gradient. F-type ATPases consist of two structural domains, F(1) containing the extramembraneous catalytic core and F(0) containing the membrane proton channel, linked together by a central stalk and a peripheral stalk. During catalysis, ATP synthesis in the catalytic domain of F(1) is coupled via a rotary mechanism of the central stalk subunits to proton translocation. In terms of biological role, component of the F(0) channel, it forms part of the peripheral stalk, linking F(1) to F(0). In Propionigenium modestum, this protein is ATP synthase subunit b, sodium ion specific (atpF).